Reading from the N-terminus, the 179-residue chain is Protein GrpE (179 aa).

Residues 1 to 20 (MSEETKEEIKNEKVDEEVTE) form a disordered region.

This sequence belongs to the GrpE family. In terms of assembly, homodimer.

The protein localises to the cytoplasm. Its function is as follows. Participates actively in the response to hyperosmotic and heat shock by preventing the aggregation of stress-denatured proteins, in association with DnaK and GrpE. It is the nucleotide exchange factor for DnaK and may function as a thermosensor. Unfolded proteins bind initially to DnaJ; upon interaction with the DnaJ-bound protein, DnaK hydrolyzes its bound ATP, resulting in the formation of a stable complex. GrpE releases ADP from DnaK; ATP binding to DnaK triggers the release of the substrate protein, thus completing the reaction cycle. Several rounds of ATP-dependent interactions between DnaJ, DnaK and GrpE are required for fully efficient folding. The chain is Protein GrpE from Lactococcus lactis subsp. cremoris (strain MG1363).